Here is a 245-residue protein sequence, read N- to C-terminus: MAPK-interacting and spindle-stabilizing protein-like (245 aa).

The tract at residues 1 to 245 is disordered; the sequence is MSDEFSLADA…PMPGGPHSYH (245 aa). N-acetylserine is present on Ser-2. 3 positions are modified to phosphoserine: Ser-2, Ser-6, and Ser-15. A compositionally biased stretch (polar residues) spans 17–26; it reads AKTSAVSNTK. Residues 34-51 show a composition bias toward low complexity; sequence WPGSNPWNNPSAPSSVPS. 3 stretches are compositionally biased toward pro residues: residues 74–127, 164–190, and 198–207; these read SVPP…PELP, PNMPYPSPGPYPAPPPPQAPGAAPPVP, and AWGPPAPYPA.

Belongs to the MISS family.

The polypeptide is MAPK-interacting and spindle-stabilizing protein-like (MAPK1IP1L) (Homo sapiens (Human)).